We begin with the raw amino-acid sequence, 475 residues long: Tubulin gamma chain (475 aa).

142-148 (AGGTGSG) is a GTP binding site. The tract at residues 455–475 (GKQVSGEGNTSGTVDSRVGAS) is disordered.

It belongs to the tubulin family.

The protein localises to the cytoplasm. The protein resides in the cytoskeleton. Its subcellular location is the microtubule organizing center. In terms of biological role, tubulin is the major constituent of microtubules. The gamma chain is found at microtubule organizing centers (MTOC) such as the spindle poles, suggesting that it is involved in the minus-end nucleation of microtubule assembly. This Physcomitrium patens (Spreading-leaved earth moss) protein is Tubulin gamma chain (TUBG1).